Consider the following 309-residue polypeptide: Olfactory receptor 5AC2 (309 aa).

Over 1-27 the chain is Extracellular; that stretch reads MDISEGNKTLVTEFVLTGLTDRPWLHV. The N-linked (GlcNAc...) asparagine glycan is linked to Asn-7. The chain crosses the membrane as a helical span at residues 28–48; that stretch reads LFFVVFLVVYLITMVGNLGLI. The Cytoplasmic segment spans residues 49-56; it reads VLIWNDPH. The chain crosses the membrane as a helical span at residues 57 to 77; sequence LHMPMYLFLGGLAFSDACTST. Residues 78–101 are Extracellular-facing; the sequence is SITPRMLVNFLDKTAMISLAECIT. A disulfide bridge connects residues Cys-99 and Cys-191. The helical transmembrane segment at 102 to 122 threads the bilayer; it reads QFYFFASSATTECFLLVMMAY. The Cytoplasmic segment spans residues 123 to 135; sequence DRYVAICNPLLYP. A helical membrane pass occupies residues 136 to 156; it reads VMMSNKLSAQLLSISYVIGFL. Over 157–198 the chain is Extracellular; the sequence is HPLVHVSLLLRLTFCRFNIIHYFYCEILQLFKISCNGPSINA. Residues 199–219 form a helical membrane-spanning segment; it reads LMIFIFGAFIQIPTLMTIIIS. At 220–239 the chain is on the cytoplasmic side; it reads YTRVLFDILKKKSEKGRSKA. Residues 240-260 traverse the membrane as a helical segment; sequence FSTCGAHLLSVSLYYGTLIFM. The Extracellular portion of the chain corresponds to 261–273; the sequence is YVRPASGLAEDQD. A helical transmembrane segment spans residues 274–294; sequence KVYSLFYTIIIPLLNPFIYSL. Topologically, residues 295 to 309 are cytoplasmic; the sequence is RNKKVMHALRRVIRK.

It belongs to the G-protein coupled receptor 1 family.

The protein resides in the cell membrane. Odorant receptor. The sequence is that of Olfactory receptor 5AC2 (OR5AC2) from Homo sapiens (Human).